The following is a 99-amino-acid chain: Acylphosphatase (99 aa).

Positions 5–97 (VRQVMIRGRV…RPGERFSQLP (93 aa)) constitute an Acylphosphatase-like domain. Active-site residues include arginine 20 and asparagine 38.

The protein belongs to the acylphosphatase family.

It catalyses the reaction an acyl phosphate + H2O = a carboxylate + phosphate + H(+). This Nitrobacter winogradskyi (strain ATCC 25391 / DSM 10237 / CIP 104748 / NCIMB 11846 / Nb-255) protein is Acylphosphatase (acyP).